Here is a 629-residue protein sequence, read N- to C-terminus: Methionine--tRNA ligase (629 aa).

Residues 10–20 (YYVNSEPHIGS) carry the 'HIGH' region motif. 4 residues coordinate Zn(2+): C125, C128, C146, and C149. The 'KMSKS' region signature appears at 297–301 (KISKS). K300 lines the ATP pocket. The tRNA-binding domain occupies 529–629 (DFSKVDLRIA…GEITPGAKVS (101 aa)).

The protein belongs to the class-I aminoacyl-tRNA synthetase family. MetG type 2A subfamily. In terms of assembly, homodimer. Zn(2+) is required as a cofactor.

It localises to the cytoplasm. The enzyme catalyses tRNA(Met) + L-methionine + ATP = L-methionyl-tRNA(Met) + AMP + diphosphate. Functionally, is required not only for elongation of protein synthesis but also for the initiation of all mRNA translation through initiator tRNA(fMet) aminoacylation. The polypeptide is Methionine--tRNA ligase (metG) (Thermotoga maritima (strain ATCC 43589 / DSM 3109 / JCM 10099 / NBRC 100826 / MSB8)).